A 94-amino-acid polypeptide reads, in one-letter code: Small ribosomal subunit protein uS19c (94 aa).

This sequence belongs to the universal ribosomal protein uS19 family.

The protein resides in the plastid. In terms of biological role, protein S19 forms a complex with S13 that binds strongly to the 16S ribosomal RNA. This is Small ribosomal subunit protein uS19c (rps19) from Epifagus virginiana (Beechdrops).